A 358-amino-acid chain; its full sequence is Trace amine-associated receptor 7h (358 aa).

At 1 to 47 (MATDDESFPWDQDSILSRDLLSALSPQLCYENLNRSCVRSPYSPGPR) the chain is on the extracellular side. N-linked (GlcNAc...) asparagine glycosylation occurs at N34. Intrachain disulfides connect C37–C201 and C120–C205. Residues 48–68 (LILYAVFGFGAVLAVCGNLLV) form a helical membrane-spanning segment. Over 69-83 (MTSILHFRQLHSPAN) the chain is Cytoplasmic. The helical transmembrane segment at 84 to 104 (FLVASLACADLLVGLTVMPFS) threads the bilayer. Over 105–125 (MVRSVEGCWYFGDSYCKLHTS) the chain is Extracellular. Residues 126-143 (FDMSFCCSSLLHLCFISV) traverse the membrane as a helical segment. Residues 144 to 166 (DRYIAVSDPLIYPIRFTASVSGK) are Cytoplasmic-facing. The helical transmembrane segment at 167–187 (CITFSWFLSIIYGFSLIYTGA) threads the bilayer. The Extracellular segment spans residues 188 to 217 (SEAGLKDLVSALSCVGGCQIPMNQSCVLIN). The N-linked (GlcNAc...) asparagine glycan is linked to N210. A helical membrane pass occupies residues 218 to 238 (FLLFLVPTLVMMTVYSKIFLI). Residues 239 to 274 (AKQQAQNMEKMSKQTTRASDSYKDRVAKRERKAAKT) are Cytoplasmic-facing. The helical transmembrane segment at 275-295 (LGIAVAAFLLSWLPYLIDSII) threads the bilayer. The Extracellular segment spans residues 296–309 (DAFLGFITPSYVYE). The helical transmembrane segment at 310–333 (ILVWIVYYNSAMNPLIYAFFYPWF) threads the bilayer. The Cytoplasmic segment spans residues 334-358 (RNAIKLIVTGKILKQNSSTTNLFSE).

The protein belongs to the G-protein coupled receptor 1 family.

Its subcellular location is the cell membrane. Functionally, olfactory receptor specific for N,N-dimethylalkylamines trace amines. Trace amine compounds are enriched in animal body fluids and act on trace amine-associated receptors (TAARs) to elicit both intraspecific and interspecific innate behaviors. Ligand-binding causes a conformation change that triggers signaling via G(s)-class of G alpha proteins (GNAL or GNAS). This chain is Trace amine-associated receptor 7h, found in Rattus norvegicus (Rat).